A 111-amino-acid polypeptide reads, in one-letter code: uncharacterized protein (111 aa).

The disordered stretch occupies residues 12 to 34; the sequence is AWCPSRPPASAPSAPQEAARRGD. Residues 71–76 are required for interaction with PPP3CA; it reads PNIIIT. Phosphothreonine is present on residues threonine 79 and threonine 81.

As to quaternary structure, interacts (via PxIxIT motif, when phosphorylated on Thr-79) with PPP3CA.

This is an uncharacterized protein from Mus musculus (Mouse).